The following is a 706-amino-acid chain: Cyclic nucleotide-gated ion channel 18 (706 aa).

The Cytoplasmic segment spans residues 1–53 (MNKIRSLRCLLPETITSASTAASNRGSDGSQFSVLWRHQILDPDSNIVTYWNH). A helical membrane pass occupies residues 54–74 (VFLITSILALFLDPFYFYVPY). Residues 75-86 (VGGPACLSIDIS) lie on the Extracellular side of the membrane. A helical transmembrane segment spans residues 87-107 (LAATVTFFRTVADIFHLLHIF). At 108–142 (MKFRTAFVARSSRVFGRGELVMDSREIAMRYLKTD) the chain is on the cytoplasmic side. The helical transmembrane segment at 143–163 (FLIDVAAMLPLPQLVIWLVIP) threads the bilayer. The Extracellular segment spans residues 164–174 (AATNGTANHAN). A helical membrane pass occupies residues 175–195 (STLALIVLVQYIPRSFIIFPL). Topologically, residues 196–217 (NQRIIKTTGFIAKTAWAGAAYN) are cytoplasmic. A helical transmembrane segment spans residues 218 to 238 (LLLYILASHVLGAMWYLSSIG). Topologically, residues 239–345 (RQFSCWSNVC…ITTSVYLGET (107 aa)) are extracellular. The chain crosses the membrane as a helical span at residues 346–366 (LFCITICIFGLILFTLLIGNM). The Cytoplasmic portion of the chain corresponds to 367 to 706 (QSSLQSMSVR…PDFSIDKEDV (340 aa)). Residues 449-579 (FFSQ…AFRY) and E520 contribute to the a nucleoside 3',5'-cyclic phosphate site. The interval 565–580 (FKRLQSKKLQHAFRYY) is calmodulin-binding. The region spanning 585–614 (RAWGACFVQSAWRRYKRRKLAKELSLHESS) is the IQ domain. Positions 661–706 (ANTRRGTNQKASSSSTGKKDGSSTSLKMPQLFKPDEPDFSIDKEDV) are disordered. Positions 693 to 706 (KPDEPDFSIDKEDV) are enriched in basic and acidic residues.

This sequence belongs to the cyclic nucleotide-gated cation channel (TC 1.A.1.5) family. In terms of assembly, homomultimer. Interacts with CPK32. As to expression, expressed in pollen grains. Not detected in leaves, roots or root hairs.

The protein localises to the cell membrane. It localises to the cytoplasmic vesicle membrane. Cyclic nucleotide-gated ion channel required for directional pollen tube growth into the transmitting tract. Acts as a Ca(2+)-permeable divalent cation-selective channel inhibited by either lanthanum or gadolinium. Regulated by CPK32 to mediate Ca(2+) transport across the plasma membrane in response to Ca(2+) oscillation. In Arabidopsis thaliana (Mouse-ear cress), this protein is Cyclic nucleotide-gated ion channel 18.